The following is a 163-amino-acid chain: NADH-quinone oxidoreductase subunit I (163 aa).

4Fe-4S ferredoxin-type domains follow at residues 53–83 and 94–123; these read LRRY…IEAG and VRYD…EGPN. Positions 63, 66, 69, 73, 103, 106, 109, and 113 each coordinate [4Fe-4S] cluster.

It belongs to the complex I 23 kDa subunit family. As to quaternary structure, NDH-1 is composed of 14 different subunits. Subunits NuoA, H, J, K, L, M, N constitute the membrane sector of the complex. It depends on [4Fe-4S] cluster as a cofactor.

It is found in the cell inner membrane. The enzyme catalyses a quinone + NADH + 5 H(+)(in) = a quinol + NAD(+) + 4 H(+)(out). NDH-1 shuttles electrons from NADH, via FMN and iron-sulfur (Fe-S) centers, to quinones in the respiratory chain. The immediate electron acceptor for the enzyme in this species is believed to be ubiquinone. Couples the redox reaction to proton translocation (for every two electrons transferred, four hydrogen ions are translocated across the cytoplasmic membrane), and thus conserves the redox energy in a proton gradient. The sequence is that of NADH-quinone oxidoreductase subunit I from Brucella suis (strain ATCC 23445 / NCTC 10510).